We begin with the raw amino-acid sequence, 258 residues long: Tetraspanin-18B (258 aa).

Residues Met-1–Met-25 are Cytoplasmic-facing. Residues Phe-26–Val-46 form a helical membrane-spanning segment. Residues Val-47–Pro-61 are Extracellular-facing. A helical membrane pass occupies residues Leu-62–Phe-82. The Cytoplasmic segment spans residues Leu-83–Cys-94. The chain crosses the membrane as a helical span at residues Leu-95–Ile-115. Residues Leu-116 to Tyr-228 are Extracellular-facing. Asn-141 carries N-linked (GlcNAc...) asparagine glycosylation. The helical transmembrane segment at Ile-229–Phe-249 threads the bilayer. The Cytoplasmic segment spans residues Ala-250–Gln-258.

It belongs to the tetraspanin (TM4SF) family.

The protein localises to the membrane. May regulate angiogenesis through KDR/VEGFR2 and NOTCH1 pathways. This Danio rerio (Zebrafish) protein is Tetraspanin-18B (tspan18b).